A 398-amino-acid chain; its full sequence is Palmitoyl-[acyl-carrier-protein] 4-desaturase 3, chloroplastic (398 aa).

A chloroplast-targeting transit peptide spans 1–29; that stretch reads MALRSLFLPNAFPNASSFRGGSRRGAAPR. Residues Glu-139, Glu-177, His-180, Glu-230, Glu-263, and His-266 each coordinate Fe cation.

Belongs to the fatty acid desaturase type 2 family. Homodimer. Requires Fe(2+) as cofactor. In terms of tissue distribution, preferentially expressed in the flower labellum. Low expression in leaves.

The protein resides in the plastid. The protein localises to the chloroplast stroma. The enzyme catalyses hexadecanoyl-[ACP] + 2 reduced [2Fe-2S]-[ferredoxin] + O2 + 2 H(+) = (4Z)-hexadecenoyl-[ACP] + 2 oxidized [2Fe-2S]-[ferredoxin] + 2 H2O. It participates in lipid metabolism; fatty acid metabolism. Its function is as follows. Converts palmitoyl-ACP to (4Z)-hexadec-4-enoyl-ACP by introduction of a cis double bond between carbons 4 and 5 of the acyl chain. This Ophrys arachnitiformis subsp. archipelagi (Orchid) protein is Palmitoyl-[acyl-carrier-protein] 4-desaturase 3, chloroplastic (SAD3).